A 223-amino-acid polypeptide reads, in one-letter code: Glutathione S-transferase 4 (223 aa).

Alanine 2 is subject to Blocked amino end (Ala). Residues 4-85 (PAVKVYGWAI…HVLRKHKPEL (82 aa)) enclose the GST N-terminal domain. Glutathione contacts are provided by residues serine 14, 43 to 44 (HR), 56 to 57 (KV), and 69 to 70 (ES). The GST C-terminal domain occupies 90–223 (RLEQTAMVDV…VGAGAPKEQE (134 aa)).

The protein belongs to the GST superfamily. Phi family. As to quaternary structure, homodimer or heterodimer of GST-I and GST-IV (=GST-II). As to expression, seedling roots.

It carries out the reaction RX + glutathione = an S-substituted glutathione + a halide anion + H(+). Conjugation of reduced glutathione to a wide number of exogenous and endogenous hydrophobic electrophiles. Involved in the detoxification of certain herbicides. Most active with substrates possessing a chloroacetamide structure. Trans-cinnamic acid and 1-chloro-2,4-dinitrobenzene are not effective substrates. May play an important role in the benoxacor-mediated protection of maize from metolachlor injury. This Zea mays (Maize) protein is Glutathione S-transferase 4 (GST4).